A 783-amino-acid chain; its full sequence is Endonuclease MutS2 (783 aa).

Residue 328 to 335 coordinates ATP; it reads GPNTGGKT. In terms of domain architecture, Smr spans 708–783; it reads LDLRGKRYEE…GSGCTIATLG (76 aa).

It belongs to the DNA mismatch repair MutS family. MutS2 subfamily. As to quaternary structure, homodimer. Binds to stalled ribosomes, contacting rRNA.

Its function is as follows. Endonuclease that is involved in the suppression of homologous recombination and thus may have a key role in the control of bacterial genetic diversity. Acts as a ribosome collision sensor, splitting the ribosome into its 2 subunits. Detects stalled/collided 70S ribosomes which it binds and splits by an ATP-hydrolysis driven conformational change. Acts upstream of the ribosome quality control system (RQC), a ribosome-associated complex that mediates the extraction of incompletely synthesized nascent chains from stalled ribosomes and their subsequent degradation. Probably generates substrates for RQC. The protein is Endonuclease MutS2 of Streptococcus thermophilus (strain ATCC BAA-250 / LMG 18311).